Here is a 381-residue protein sequence, read N- to C-terminus: Chaperone protein DnaJ (381 aa).

The J domain occupies 5–70; that stretch reads DYYEVLGLQK…QKRAAYDQYG (66 aa). Residues 133 to 211 form a CR-type zinc finger; the sequence is GTTKDIQINT…CHGEGRVHKK (79 aa). Cysteine 146, cysteine 149, cysteine 163, cysteine 166, cysteine 185, cysteine 188, cysteine 199, and cysteine 202 together coordinate Zn(2+). CXXCXGXG motif repeat units lie at residues 146-153, 163-170, 185-192, and 199-206; these read CDSCGGSG, CPHCHGSG, CPTCHGSG, and CRSCHGEG.

This sequence belongs to the DnaJ family. Homodimer. Zn(2+) serves as cofactor.

Its subcellular location is the cytoplasm. Its function is as follows. Participates actively in the response to hyperosmotic and heat shock by preventing the aggregation of stress-denatured proteins and by disaggregating proteins, also in an autonomous, DnaK-independent fashion. Unfolded proteins bind initially to DnaJ; upon interaction with the DnaJ-bound protein, DnaK hydrolyzes its bound ATP, resulting in the formation of a stable complex. GrpE releases ADP from DnaK; ATP binding to DnaK triggers the release of the substrate protein, thus completing the reaction cycle. Several rounds of ATP-dependent interactions between DnaJ, DnaK and GrpE are required for fully efficient folding. Also involved, together with DnaK and GrpE, in the DNA replication of plasmids through activation of initiation proteins. This Haemophilus influenzae (strain 86-028NP) protein is Chaperone protein DnaJ.